The chain runs to 580 residues: DNA ligase 1 (580 aa).

E245 is a binding site for ATP. Catalysis depends on K247, which acts as the N6-AMP-lysine intermediate. ATP contacts are provided by R252, R267, E297, F343, R420, and K426.

This sequence belongs to the ATP-dependent DNA ligase family. Mg(2+) is required as a cofactor.

The catalysed reaction is ATP + (deoxyribonucleotide)n-3'-hydroxyl + 5'-phospho-(deoxyribonucleotide)m = (deoxyribonucleotide)n+m + AMP + diphosphate.. Functionally, DNA ligase that seals nicks in double-stranded DNA during DNA replication, DNA recombination and DNA repair. The chain is DNA ligase 1 from Methanosarcina acetivorans (strain ATCC 35395 / DSM 2834 / JCM 12185 / C2A).